Here is a 60-residue protein sequence, read N- to C-terminus: Protein YmjC (60 aa).

The interval 40-60 (HKPYPTNKMQTTSGKKVIQDR) is disordered.

The sequence is that of Protein YmjC (ymjC) from Escherichia coli (strain K12).